The chain runs to 634 residues: Frizzled and smoothened-like protein D (634 aa).

The signal sequence occupies residues 1 to 21 (MINKFKFYLIFLKLILILVNC). At 22 to 257 (QNSLNDYGFG…QMDSVINMSK (236 aa)) the chain is on the extracellular side. The FZ domain occupies 34–178 (DESSICTSYI…LTKYGYTANG (145 aa)). 5 N-linked (GlcNAc...) asparagine glycosylation sites follow: Asn126, Asn168, Asn215, Asn243, and Asn254. A helical transmembrane segment spans residues 258-278 (AMSSISFVLSLFNVITFGLLI). Over 279-287 (KKKSKYNVC) the chain is Cytoplasmic. A helical transmembrane segment spans residues 288-308 (IALMAIGSSFIYLSDIINYGV). Residues 309-335 (GIEKQLCPEPGRVATQRVDSLCGFTGS) lie on the Extracellular side of the membrane. A helical membrane pass occupies residues 336-356 (IFHIGITLCVLWSMTMGIVLY). Residues 357–368 (SKIKQFKLPNFR) lie on the Cytoplasmic side of the membrane. The chain crosses the membrane as a helical span at residues 369 to 389 (YFLIGNLSFTVVTLIILASAK). At 390 to 410 (KFQGGNGFLECWMRDRWYVVA) the chain is on the extracellular side. The helical transmembrane segment at 411 to 431 (IFWIPCGIALLLGVLSICGVI) threads the bilayer. Residues 432 to 454 (FEIYKISKNVSLKDSKVVIRELK) are Cytoplasmic-facing. A helical transmembrane segment spans residues 455–475 (PFVLVVTVSASLIYLFVFYFD). Residues 476 to 513 (SESKYDFYKKGVEDYILCLLTSENPLDECYTVGPNFNS) lie on the Extracellular side of the membrane. The chain crosses the membrane as a helical span at residues 514-534 (YFMFYFLIRFFGILFFGIFGT). Topologically, residues 535 to 634 (SEIARNAWTE…MEIELDSIDI (100 aa)) are cytoplasmic. Residues 560-624 (VSSSTRGGGG…NNNNNDNNNK (65 aa)) are disordered. 2 stretches are compositionally biased toward low complexity: residues 572-592 (SGIKSSSSSSNSGVCNNNNST) and 609-622 (DNTIITNNNNNDNN).

Belongs to the G-protein coupled receptor Fz/Smo family.

The protein localises to the membrane. This Dictyostelium discoideum (Social amoeba) protein is Frizzled and smoothened-like protein D (fslD).